A 335-amino-acid polypeptide reads, in one-letter code: Biotin synthase (335 aa).

Positions 46–274 (YNIQLASLFS…KSKIRLSAGR (229 aa)) constitute a Radical SAM core domain. Cysteine 61, cysteine 65, and cysteine 68 together coordinate [4Fe-4S] cluster. Residues cysteine 105, cysteine 137, cysteine 197, and arginine 269 each coordinate [2Fe-2S] cluster.

It belongs to the radical SAM superfamily. Biotin synthase family. As to quaternary structure, homodimer. [4Fe-4S] cluster serves as cofactor. It depends on [2Fe-2S] cluster as a cofactor.

It catalyses the reaction (4R,5S)-dethiobiotin + (sulfur carrier)-SH + 2 reduced [2Fe-2S]-[ferredoxin] + 2 S-adenosyl-L-methionine = (sulfur carrier)-H + biotin + 2 5'-deoxyadenosine + 2 L-methionine + 2 oxidized [2Fe-2S]-[ferredoxin]. It participates in cofactor biosynthesis; biotin biosynthesis; biotin from 7,8-diaminononanoate: step 2/2. In terms of biological role, catalyzes the conversion of dethiobiotin (DTB) to biotin by the insertion of a sulfur atom into dethiobiotin via a radical-based mechanism. This is Biotin synthase from Prochlorococcus marinus (strain MIT 9312).